We begin with the raw amino-acid sequence, 500 residues long: Envelop protein OPG153 (500 aa).

The cysteines at positions 43 and 342 are disulfide-linked.

The protein belongs to the orthopoxvirus OPG153 protein family. As to quaternary structure, interacts with proteins OPG094 and OPG143. Interacts with OPG154. Interacts with OPG152. Interacts with host laminin.

It is found in the virion membrane. Its function is as follows. Envelop protein that mediates acid-dependent endocytosis into host cells. Plays an important role in endocytic entry of the virus by acting as an acid-sensitive membrane fusion suppressor. Low pH in host endosomes triggers conformational changes to allow de-repression of viral fusion complex activity and membrane fusion within vesicles. Also plays a role in bridging the mature virion with structural protein OPG152. This is Envelop protein OPG153 (OPG153) from Vaccinia virus (strain Western Reserve) (VACV).